Consider the following 439-residue polypeptide: Glutamate--tRNA ligase 2 (439 aa).

The 'HIGH' region signature appears at 6–16 (PSPTGDMHIGN). The 'KMSKS' region motif lies at 232-236 (KMSKR). Lys235 contacts ATP.

It belongs to the class-I aminoacyl-tRNA synthetase family. Glutamate--tRNA ligase type 1 subfamily. Monomer.

Its subcellular location is the cytoplasm. It carries out the reaction tRNA(Glu) + L-glutamate + ATP = L-glutamyl-tRNA(Glu) + AMP + diphosphate. In terms of biological role, catalyzes the attachment of glutamate to tRNA(Glu) in a two-step reaction: glutamate is first activated by ATP to form Glu-AMP and then transferred to the acceptor end of tRNA(Glu). This chain is Glutamate--tRNA ligase 2, found in Helicobacter pylori (strain Shi470).